The chain runs to 108 residues: MLTSTTDIVQGRTIARYHGIVTAEVVYGTNALRDFFAGIRDLIGGRTGSYEQIFEKGHREAIAELTERAQKLGANGVIGVAVNTGTINIDDRGALLLITATGTAVTVD.

This sequence belongs to the UPF0145 family.

The sequence is that of UPF0145 protein sll118 from Synechocystis sp. (strain ATCC 27184 / PCC 6803 / Kazusa).